The chain runs to 469 residues: Mitochondrial adenyl nucleotide antiporter SLC25A25 (469 aa).

The segment at 1 to 165 is regulatory N-terminal domain; the sequence is MLCLCLYVPV…LYWKHSTIFD (165 aa). The Mitochondrial intermembrane segment spans residues 1–189; that stretch reads MLCLCLYVPV…ERQTGMWWRH (189 aa). EF-hand domains follow at residues 47-80, 78-113, and 114-149; these read TYRQ…QDHE, DHEK…LGVK, and ISEQ…HPVE. Positions 60, 62, 64, 66, and 71 each coordinate Ca(2+). Positions 151-160 are linker region; it reads IPEIILYWKH. A C-terminal transmembrane transporter domain region spans residues 166–469; sequence VGENLTVPDE…LKITLGVQSR (304 aa). Solcar repeat units lie at residues 184 to 270, 278 to 363, and 375 to 463; these read GMWW…IKRL, LRIH…LKNA, and PGVF…LKIT. The helical transmembrane segment at 190-207 threads the bilayer; the sequence is LVAGGGAGAVSRTCTAPL. The Mitochondrial matrix segment spans residues 208–244; the sequence is DRLKVLMQVHASRSNNMGIVGGFTQMIREGGARSLWR. Residues 245-264 form a helical membrane-spanning segment; sequence GNGINVLKIAPESAIKFMAY. The Mitochondrial intermembrane portion of the chain corresponds to 265-287; that stretch reads EQIKRLVGSDQETLRIHERLVAG. The helical transmembrane segment at 288 to 301 threads the bilayer; that stretch reads SLAGAIAQSSIYPM. At 302–337 the chain is on the mitochondrial matrix side; sequence EVLKTRMALRKTGQYSGMLDCARRILAREGVAAFYK. The chain crosses the membrane as a helical span at residues 338 to 357; it reads GYVPNMLGIIPYAGIDLAVY. The Mitochondrial intermembrane portion of the chain corresponds to 358-380; the sequence is ETLKNAWLQHYAVNSADPGVFVL. A helical membrane pass occupies residues 381–398; sequence LACGTMSSTCGQLASYPL. Topologically, residues 399–437 are mitochondrial matrix; it reads ALVRTRMQAQASIEGAPEVTMSSLFKHILRTEGAFGLYR. A helical transmembrane segment spans residues 438–457; the sequence is GLAPNFMKVIPAVSISYVVY. The Mitochondrial intermembrane portion of the chain corresponds to 458 to 469; the sequence is ENLKITLGVQSR.

Belongs to the mitochondrial carrier (TC 2.A.29) family. In terms of tissue distribution, widely expressed. Expressed in fetal and adult liver, skeletal muscle, testis, ovary, hippocampus and caudate nucleus. Expressed in all tissues tested. As to expression, expression is restricted to kidney and lung.

It localises to the mitochondrion inner membrane. It carries out the reaction Mg(2+)(out) + phosphate(in) + ATP(out) = Mg(2+)(in) + phosphate(out) + ATP(in). Activated by an increase in cytosolic calcium levels that induce a conformational change of the N-terminal regulatory domain, uncapping the channel and allowing transport. Its function is as follows. Electroneutral antiporter that most probably mediates the transport of adenyl nucleotides through the inner mitochondrial membrane. Originally identified as an ATP-magnesium/inorganic phosphate antiporter, it could have a broader specificity for adenyl nucleotides. By regulating the mitochondrial matrix adenyl nucleotide pool could adapt to changing cellular energetic demands and indirectly regulate adenyl nucleotide-dependent metabolic pathways. The chain is Mitochondrial adenyl nucleotide antiporter SLC25A25 from Homo sapiens (Human).